The sequence spans 463 residues: UDP-N-acetylmuramoylalanine--D-glutamate ligase (463 aa).

116-122 contributes to the ATP binding site; the sequence is GTNGKTT.

It belongs to the MurCDEF family.

The protein localises to the cytoplasm. It catalyses the reaction UDP-N-acetyl-alpha-D-muramoyl-L-alanine + D-glutamate + ATP = UDP-N-acetyl-alpha-D-muramoyl-L-alanyl-D-glutamate + ADP + phosphate + H(+). Its pathway is cell wall biogenesis; peptidoglycan biosynthesis. In terms of biological role, cell wall formation. Catalyzes the addition of glutamate to the nucleotide precursor UDP-N-acetylmuramoyl-L-alanine (UMA). In Synechococcus elongatus (strain ATCC 33912 / PCC 7942 / FACHB-805) (Anacystis nidulans R2), this protein is UDP-N-acetylmuramoylalanine--D-glutamate ligase.